The sequence spans 247 residues: Carboxy-S-adenosyl-L-methionine synthase (247 aa).

S-adenosyl-L-methionine contacts are provided by residues tyrosine 40, 65–67 (GCS), 90–91 (DN), 122–123 (DI), asparagine 137, and arginine 204.

This sequence belongs to the class I-like SAM-binding methyltransferase superfamily. Cx-SAM synthase family. In terms of assembly, homodimer.

It carries out the reaction prephenate + S-adenosyl-L-methionine = carboxy-S-adenosyl-L-methionine + 3-phenylpyruvate + H2O. Its function is as follows. Catalyzes the conversion of S-adenosyl-L-methionine (SAM) to carboxy-S-adenosyl-L-methionine (Cx-SAM). This chain is Carboxy-S-adenosyl-L-methionine synthase, found in Pseudomonas syringae pv. tomato (strain ATCC BAA-871 / DC3000).